A 282-amino-acid polypeptide reads, in one-letter code: MNIAELYGKMGKHSWRIMDAIFKNLWDYEYVPLQLISSHARIGEEKARNILKYLSDLRVVQNRQKDYEGSTFTFIGLSLYSLHRLVRSGKVDAIGKLMGEGKESAVFNCYSEKFGECVVKFHKVGHTSFKKVKEKRDYGDLHFSVLAIRSARNEFRALQKLQGLAVPKVYAWEGNAVLMELIDAKELYRVRVENPDEVLDMILEEVAKFYHRGIVHGDLSQYNVLVSEEGIWIIDFPQSVEVGEEGWREILERDVRNIITYFSRTYRTEKDINSAIDRILQE.

The region spanning 92–282 (DAIGKLMGEG…NSAIDRILQE (191 aa)) is the Protein kinase domain. ATP contacts are provided by residues 98-106 (MGEGKESAV), Lys-120, and His-126. Glu-103 lines the Mg(2+) pocket. Ser-128 is subject to Phosphoserine; by autocatalysis. 180–186 (ELIDAKE) is an ATP binding site. Asp-218 serves as the catalytic Proton acceptor. Residues Tyr-222, Asn-223, and Asp-235 each contribute to the ATP site. Mg(2+)-binding residues include Asn-223 and Asp-235.

Belongs to the protein kinase superfamily. RIO-type Ser/Thr kinase family. Monomer. Requires Mg(2+) as cofactor. The cofactor is Mn(2+). Post-translationally, autophosphorylated.

The catalysed reaction is L-seryl-[protein] + ATP = O-phospho-L-seryl-[protein] + ADP + H(+). It catalyses the reaction L-threonyl-[protein] + ATP = O-phospho-L-threonyl-[protein] + ADP + H(+). This is RIO-type serine/threonine-protein kinase Rio2 (rio2) from Archaeoglobus fulgidus (strain ATCC 49558 / DSM 4304 / JCM 9628 / NBRC 100126 / VC-16).